The following is a 414-amino-acid chain: MNELILKGERAKEASYVLMNATTSEKNDALIKMGQKLLENKDYIIAENEKDLENAMLKGTSKAMLDRLSLDEKRLEDMADGLNQLVNLNDPIGEVITMWKRPNGLQIGKQRVPMGVIGIIYEARPNVTCDAAGLCLKAGNAVILRGGSEAINSNKAIVKALCEGIKESGLPEYSLQLIENTSREIANEMMRLNEYIDVLIPRGGAGLIQAVVKNATVPVIETGVGNCHVYVDEEADFKMAEDIIINAKTSRPAVCNAEEKLLVNEKIAEEFLPKIISALREKNVEVRGDSNVMKIADDVKEATDEDWGKEYLDFIIGIKIVNNIDEAIKHINRYGSGHSEAIITNNYQNSQKFLQRVDAAAVYVNASTRFTDGCEFGFGAEIGISTQKLHARGPMGLNELTTTKYIIYGNGQIR.

The protein belongs to the gamma-glutamyl phosphate reductase family.

The protein resides in the cytoplasm. The enzyme catalyses L-glutamate 5-semialdehyde + phosphate + NADP(+) = L-glutamyl 5-phosphate + NADPH + H(+). It functions in the pathway amino-acid biosynthesis; L-proline biosynthesis; L-glutamate 5-semialdehyde from L-glutamate: step 2/2. Its function is as follows. Catalyzes the NADPH-dependent reduction of L-glutamate 5-phosphate into L-glutamate 5-semialdehyde and phosphate. The product spontaneously undergoes cyclization to form 1-pyrroline-5-carboxylate. This is Gamma-glutamyl phosphate reductase from Clostridium botulinum (strain Alaska E43 / Type E3).